The primary structure comprises 722 residues: Probable acyl-activating enzyme 16, chloroplastic (722 aa).

Residues 1–47 (MASTSLGASILVSHCSSAPEFQVSGMRLVFGYKAFGCRTSRRGFRVR) constitute a chloroplast transit peptide.

The protein belongs to the ATP-dependent AMP-binding enzyme family.

The protein localises to the plastid. The protein resides in the chloroplast. May be involved in the activation of fatty acids to acyl-carrier-protein. This Arabidopsis thaliana (Mouse-ear cress) protein is Probable acyl-activating enzyme 16, chloroplastic (AAE16).